The following is a 501-amino-acid chain: Protein DETOXIFICATION 37 (501 aa).

12 helical membrane passes run 44-64 (MMIE…VYVI), 84-104 (LAAA…LLLG), 134-154 (VVLI…NPIL), 163-183 (VATL…AYAV), 200-220 (SAYI…IAVY), 222-242 (LGYG…IIVV), 280-300 (AVML…AGLL), 310-330 (LAIC…FNAA), 352-372 (VVTT…VLSW), 396-416 (FLAI…VAVG), 422-442 (FVAY…GFVL), and 453-473 (IWTG…IVTL).

This sequence belongs to the multi antimicrobial extrusion (MATE) (TC 2.A.66.1) family.

The protein resides in the membrane. This Arabidopsis thaliana (Mouse-ear cress) protein is Protein DETOXIFICATION 37.